We begin with the raw amino-acid sequence, 269 residues long: Enoyl-[acyl-carrier-protein] reductase [NADH] (269 aa).

NAD(+)-binding positions include 20 to 21 (SI), 64 to 65 (DV), and 95 to 96 (IG). Tyr-158 contributes to the substrate binding site. NAD(+)-binding residues include Lys-165 and Ile-194. Thr-266 bears the Phosphothreonine mark.

The protein belongs to the short-chain dehydrogenases/reductases (SDR) family. FabI subfamily. Homodimer. Homotetramer. Is phosphorylated in vivo. Phosphorylation on Thr-266 decreases enzymatic activity.

The protein resides in the secreted. It localises to the cell wall. It catalyses the reaction a 2,3-saturated acyl-[ACP] + NAD(+) = a (2E)-enoyl-[ACP] + NADH + H(+). It carries out the reaction a 2,3-saturated acyl-CoA + NAD(+) = a (2E)-enoyl-CoA + NADH + H(+). The enzyme catalyses (2E)-octenoyl-CoA + NADH + H(+) = octanoyl-CoA + NAD(+). The catalysed reaction is (2E)-dodecenoyl-CoA + NADH + H(+) = dodecanoyl-CoA + NAD(+). The protein operates within lipid metabolism; mycolic acid biosynthesis. InhA activity is controlled via phosphorylation: phosphorylation on Thr-266 decreases InhA activity and likely negatively regulates biosynthesis of mycolic acids and growth of the bacterium. InhA activity is likely inhibited by activated isoniazid, hexadecynoyl-CoA and octadecynoyl-CoA, which also block the biosynthesis of mycolic acids. The antitubercular pro-drug isoniazid (INH) is oxidatively activated by the catalase-peroxidase KatG and then covalently binds NAD to form an adduct that inhibits the activity of InhA. The inhibitory adduct is the isonicotinic-acyl-NADH where the isonicotinic-acyl group replaces the 4S (and not the 4R) hydrogen of NADH. Similarly, the antitubercular pro-drugs ethionamide (ETH) and prothionamide (PTH) are activated by the flavoprotein monooxygenase EthA, and forms an adduct with NAD (ETH-NAD and PTH-NAD, respectively) that is a tight-binding inhibitor of InhA. Its function is as follows. Enoyl-ACP reductase of the type II fatty acid syntase (FAS-II) system, which is involved in the biosynthesis of mycolic acids, a major component of mycobacterial cell walls. Catalyzes the NADH-dependent reduction of the double bond of 2-trans-enoyl-[acyl-carrier protein], an essential step in the fatty acid elongation cycle of the FAS-II pathway. Shows preference for long-chain fatty acyl thioester substrates (&gt;C16), and can also use 2-trans-enoyl-CoAs as alternative substrates. The mycobacterial FAS-II system utilizes the products of the FAS-I system as primers to extend fatty acyl chain lengths up to C56, forming the meromycolate chain that serves as the precursor for final mycolic acids. In terms of biological role, is the primary target of the first-line antitubercular drug isoniazid (INH) and of the second-line drug ethionamide (ETH). Overexpressed inhA confers INH and ETH resistance to M.smegmatis. The mechanism of isoniazid action against InhA is covalent attachment of the activated form of the drug to the nicotinamide ring of NAD and binding of the INH-NAD adduct to the active site of InhA. Similarly, the ETH-NAD adduct binds InhA. The polypeptide is Enoyl-[acyl-carrier-protein] reductase [NADH] (Mycolicibacterium smegmatis (strain ATCC 700084 / mc(2)155) (Mycobacterium smegmatis)).